Here is a 341-residue protein sequence, read N- to C-terminus: UDP-glucose 4-epimerase (341 aa).

This sequence belongs to the polysaccharide synthase family.

It catalyses the reaction UDP-alpha-D-glucose = UDP-alpha-D-galactose. Its function is as follows. Epimerizes UDP-galactose to UDP-glucose. This Rickettsia akari (strain Hartford) protein is UDP-glucose 4-epimerase (capD).